The primary structure comprises 232 residues: Large ribosomal subunit protein uL1 (232 aa).

Belongs to the universal ribosomal protein uL1 family. Part of the 50S ribosomal subunit.

Functionally, binds directly to 23S rRNA. The L1 stalk is quite mobile in the ribosome, and is involved in E site tRNA release. Protein L1 is also a translational repressor protein, it controls the translation of the L11 operon by binding to its mRNA. The sequence is that of Large ribosomal subunit protein uL1 from Bacteroides thetaiotaomicron (strain ATCC 29148 / DSM 2079 / JCM 5827 / CCUG 10774 / NCTC 10582 / VPI-5482 / E50).